The sequence spans 144 residues: D-aminoacyl-tRNA deacylase (144 aa).

The short motif at 136–137 (GP) is the Gly-cisPro motif, important for rejection of L-amino acids element.

Belongs to the DTD family. In terms of assembly, homodimer.

The protein resides in the cytoplasm. It carries out the reaction glycyl-tRNA(Ala) + H2O = tRNA(Ala) + glycine + H(+). The enzyme catalyses a D-aminoacyl-tRNA + H2O = a tRNA + a D-alpha-amino acid + H(+). An aminoacyl-tRNA editing enzyme that deacylates mischarged D-aminoacyl-tRNAs. Also deacylates mischarged glycyl-tRNA(Ala), protecting cells against glycine mischarging by AlaRS. Acts via tRNA-based rather than protein-based catalysis; rejects L-amino acids rather than detecting D-amino acids in the active site. By recycling D-aminoacyl-tRNA to D-amino acids and free tRNA molecules, this enzyme counteracts the toxicity associated with the formation of D-aminoacyl-tRNA entities in vivo and helps enforce protein L-homochirality. The sequence is that of D-aminoacyl-tRNA deacylase from Corynebacterium glutamicum (strain R).